Reading from the N-terminus, the 469-residue chain is MSSSAAALAWRRSLRDALLRGSAWRGAPAANSAAARLASTASASEAAAGPKKVPPPPRKGRLLTGAMIGLAIAGGAYVSTADEAKFCGWLFKSTQLVNPLFALLDAEFAHRLAVTAASHGFVPREKRPDPSVLGLEIWGRKFTNPIGLAAGFDKNAEAVEGLLGMGFGFVEVGSVTPLPQEGNPKPRIFRLREHGAVINRCGFNSEGIVVVAKRLGAQHGKRKMEETSSSTSPTTSDVKQGGKAGPGILGVNLGKNKISEDATADYVQGVHTLSQYADYLVINVSSPNTPGLRKLQGRKQLKDLVKKVQAARDEMQWAEDGPPPLLVKIAPDLSKQDLEDIAAVALALRLDGLIISNTTISRPSPADTHPLAQEAGGLSGKPLFDLSTNVLREMYILTRGKIPLIGCGGVSSGEDAYKKIRSGATLVQLYTAFAYGGPALIPRIKAELAECLERDGFKSVQEAVGADFK.

A mitochondrion-targeting transit peptide spans 1–37 (MSSSAAALAWRRSLRDALLRGSAWRGAPAANSAAARL). A helical transmembrane segment spans residues 62-82 (LLTGAMIGLAIAGGAYVSTAD). Residues 150–154 (AGFDK) and Ser-174 contribute to the FMN site. A substrate-binding site is contributed by Lys-154. Residue 199–203 (NRCGF) participates in substrate binding. The disordered stretch occupies residues 219–247 (HGKRKMEETSSSTSPTTSDVKQGGKAGPG). Residues 227–236 (TSSSTSPTTS) show a composition bias toward low complexity. 2 residues coordinate FMN: Asn-252 and Asn-283. Substrate is bound at residue 283-288 (NVSSPN). Catalysis depends on Ser-286, which acts as the Nucleophile. Residues Lys-328 and Ser-356 each contribute to the FMN site. 357–358 (NT) is a binding site for substrate. Residues Gly-380, Gly-409, and 430-431 (YT) each bind FMN.

The protein belongs to the dihydroorotate dehydrogenase family. Type 2 subfamily. FMN serves as cofactor.

It is found in the mitochondrion inner membrane. It carries out the reaction (S)-dihydroorotate + a quinone = orotate + a quinol. It participates in pyrimidine metabolism; UMP biosynthesis via de novo pathway; orotate from (S)-dihydroorotate (quinone route): step 1/1. Functionally, catalyzes the conversion of dihydroorotate to orotate with quinone as electron acceptor. The chain is Dihydroorotate dehydrogenase (quinone), mitochondrial (PYRD) from Oryza sativa subsp. japonica (Rice).